Here is a 220-residue protein sequence, read N- to C-terminus: Small ribosomal subunit protein uS3 (220 aa).

Residues 38-106 (IRKYVKGRLK…RVHININEIK (69 aa)) form the KH type-2 domain.

It belongs to the universal ribosomal protein uS3 family. Part of the 30S ribosomal subunit. Forms a tight complex with proteins S10 and S14.

Its function is as follows. Binds the lower part of the 30S subunit head. Binds mRNA in the 70S ribosome, positioning it for translation. This is Small ribosomal subunit protein uS3 from Brevibacillus brevis (strain 47 / JCM 6285 / NBRC 100599).